Reading from the N-terminus, the 358-residue chain is MAISPEKEKALAAALSQIDRQFGKGAIMRMSDQRLSIEAIPTGSIALDLALGVGGIPRGRVIEIYGPESSGKTTLTQHIVAETQKMGGVAAFIDAEHAFDPVYAANCGVNVEDLLVSQPDTGEQALEICETLVRSGAIDVIVVDSVAALVPRAEIEGDMGDSHVGLQARLMSQALRKLSGAVSKSRTALIFINQLRMKIGVMFGNPETTTGGNALKFYASVRLDIRKVESIKQGQDVTGARARVKVVKNKVAPPFRQAEFDIMYNEGISREGNIVDVGVTMEILRKSGAWFYLGDDRLGQGRENAKQFLKDNPALADEIEKMIRAASPGAPTAKVIVGAAAANGAAPADDGDGIFDDE.

66-73 lines the ATP pocket; sequence GPESSGKT.

Belongs to the RecA family.

The protein resides in the cytoplasm. Functionally, can catalyze the hydrolysis of ATP in the presence of single-stranded DNA, the ATP-dependent uptake of single-stranded DNA by duplex DNA, and the ATP-dependent hybridization of homologous single-stranded DNAs. It interacts with LexA causing its activation and leading to its autocatalytic cleavage. The polypeptide is Protein RecA (Herpetosiphon aurantiacus (strain ATCC 23779 / DSM 785 / 114-95)).